Reading from the N-terminus, the 277-residue chain is Ras suppressor protein 1 (277 aa).

Positions 1-24 are disordered; the sequence is MSKSLKKLVEESREKNQPEVDMSD. Position 2 is an N-acetylserine (Ser2). The segment covering 7–24 has biased composition (basic and acidic residues); that stretch reads KLVEESREKNQPEVDMSD. 7 LRR repeats span residues 41–63, 64–85, 87–109, 110–133, 135–156, 158–179, and 181–202; these read HITQLVLSHNKLTMVPPNIAELK, NLEVLNFFNNQIEELPTQISSL, KLKHLNLGMNRLNTLPRGFGSLP, ALEVLDLTYNNLSENSLPGNFFYL, TLRALYLSDNDFEILPPDIGKL, KLQILSLRDNDLISLPKEIGEL, and QLKELHIQGNRLTVLPPELGNL. The segment at 250-277 is disordered; the sequence is MQANPEPPKKNNDKSKKISRKPLAAKNR. Residues 256–265 show a composition bias toward basic and acidic residues; it reads PPKKNNDKSK.

Potentially plays a role in the Ras signal transduction pathway. Capable of suppressing v-Ras transformation in vitro. The chain is Ras suppressor protein 1 (RSU1) from Homo sapiens (Human).